Reading from the N-terminus, the 54-residue chain is Large ribosomal subunit protein bL33 (54 aa).

It belongs to the bacterial ribosomal protein bL33 family.

The polypeptide is Large ribosomal subunit protein bL33 (Corynebacterium diphtheriae (strain ATCC 700971 / NCTC 13129 / Biotype gravis)).